Here is a 424-residue protein sequence, read N- to C-terminus: Glutamyl-tRNA reductase (424 aa).

Residues 49–52, serine 107, 112–114, and glutamine 118 each bind substrate; these read TCNR and EPQ. The active-site Nucleophile is the cysteine 50. 187-192 contributes to the NADP(+) binding site; sequence GAGETI.

The protein belongs to the glutamyl-tRNA reductase family. Homodimer.

It carries out the reaction (S)-4-amino-5-oxopentanoate + tRNA(Glu) + NADP(+) = L-glutamyl-tRNA(Glu) + NADPH + H(+). It participates in porphyrin-containing compound metabolism; protoporphyrin-IX biosynthesis; 5-aminolevulinate from L-glutamyl-tRNA(Glu): step 1/2. Catalyzes the NADPH-dependent reduction of glutamyl-tRNA(Glu) to glutamate 1-semialdehyde (GSA). This Chromohalobacter salexigens (strain ATCC BAA-138 / DSM 3043 / CIP 106854 / NCIMB 13768 / 1H11) protein is Glutamyl-tRNA reductase.